Consider the following 478-residue polypeptide: Aspartate ammonia-lyase (478 aa).

5 residues coordinate L-aspartate: Thr109, Ser148, Thr149, Asn150, and Thr195. Residues 326-335 (GSSIMPGKVN) are SS loop. The active-site Proton acceptor is Ser327. L-aspartate contacts are provided by Ser328 and Lys333.

It belongs to the class-II fumarase/aspartase family. Aspartase subfamily. As to quaternary structure, homotetramer.

It carries out the reaction L-aspartate = fumarate + NH4(+). Functionally, catalyzes the reversible conversion of L-aspartate to fumarate and ammonia. The chain is Aspartate ammonia-lyase from Pseudomonas fluorescens.